The chain runs to 450 residues: Phosphoglucosamine mutase (450 aa).

Serine 101 functions as the Phosphoserine intermediate in the catalytic mechanism. Residues serine 101, aspartate 241, aspartate 243, and aspartate 245 each coordinate Mg(2+). Residue serine 101 is modified to Phosphoserine.

Belongs to the phosphohexose mutase family. It depends on Mg(2+) as a cofactor. Activated by phosphorylation.

The enzyme catalyses alpha-D-glucosamine 1-phosphate = D-glucosamine 6-phosphate. Functionally, catalyzes the conversion of glucosamine-6-phosphate to glucosamine-1-phosphate. This chain is Phosphoglucosamine mutase, found in Listeria monocytogenes serovar 1/2a (strain ATCC BAA-679 / EGD-e).